We begin with the raw amino-acid sequence, 1140 residues long: Eukaryotic translation initiation factor 3 subunit A (1140 aa).

The 184-residue stretch at 319-502 (LQRMAAHVLL…HCIYFGTDLT (184 aa)) folds into the PCI domain. 6 stretches are compositionally biased toward basic and acidic residues: residues 590-624 (NNAREEEEARRQEEESRKAKLAEQKRLEQEQEERE), 826-903 (RMAQ…RPEG), 925-965 (DRAD…KDNE), 1000-1019 (SRDDKWRRGGDRERDRDFRN), 1026-1053 (RGGDREDDRDRGGFRRNDGPRRNEEQQR), and 1061-1087 (DAPRQSDNRDNRRPAGGDRRDRDRDVR). 2 disordered regions span residues 590 to 632 (NNAR…QNEI) and 826 to 1140 (RMAQ…VKRR). A compositionally biased stretch (gly residues) spans 1091–1101 (PKEGGGGGGGN). Residues 1108–1130 (PRDEKPTTKQRDQPQDKENKAGD) are compositionally biased toward basic and acidic residues.

It belongs to the eIF-3 subunit A family. As to quaternary structure, component of the eukaryotic translation initiation factor 3 (eIF-3) complex. The eIF-3 complex interacts with pix.

The protein resides in the cytoplasm. Its function is as follows. RNA-binding component of the eukaryotic translation initiation factor 3 (eIF-3) complex, which is involved in protein synthesis of a specialized repertoire of mRNAs and, together with other initiation factors, stimulates binding of mRNA and methionyl-tRNAi to the 40S ribosome. The eIF-3 complex specifically targets and initiates translation of a subset of mRNAs involved in cell proliferation. The chain is Eukaryotic translation initiation factor 3 subunit A from Drosophila willistoni (Fruit fly).